Consider the following 344-residue polypeptide: UDP-3-O-acylglucosamine N-acyltransferase (344 aa).

Catalysis depends on histidine 248, which acts as the Proton acceptor.

This sequence belongs to the transferase hexapeptide repeat family. LpxD subfamily. In terms of assembly, homotrimer.

The enzyme catalyses a UDP-3-O-[(3R)-3-hydroxyacyl]-alpha-D-glucosamine + a (3R)-hydroxyacyl-[ACP] = a UDP-2-N,3-O-bis[(3R)-3-hydroxyacyl]-alpha-D-glucosamine + holo-[ACP] + H(+). Its pathway is bacterial outer membrane biogenesis; LPS lipid A biosynthesis. Catalyzes the N-acylation of UDP-3-O-acylglucosamine using 3-hydroxyacyl-ACP as the acyl donor. Is involved in the biosynthesis of lipid A, a phosphorylated glycolipid that anchors the lipopolysaccharide to the outer membrane of the cell. The sequence is that of UDP-3-O-acylglucosamine N-acyltransferase from Prochlorococcus marinus (strain MIT 9515).